The sequence spans 443 residues: Signal recognition particle 54 kDa protein (443 aa).

GTP is bound by residues 104–111, 184–188, and 242–245; these read GLQGSGKT, DTAGR, and TKLD.

It belongs to the GTP-binding SRP family. SRP54 subfamily. In terms of assembly, part of the signal recognition particle protein translocation system, which is composed of SRP and FtsY. Archaeal SRP consists of a 7S RNA molecule of 300 nucleotides and two protein subunits: SRP54 and SRP19.

The protein localises to the cytoplasm. The enzyme catalyses GTP + H2O = GDP + phosphate + H(+). Functionally, involved in targeting and insertion of nascent membrane proteins into the cytoplasmic membrane. Binds to the hydrophobic signal sequence of the ribosome-nascent chain (RNC) as it emerges from the ribosomes. The SRP-RNC complex is then targeted to the cytoplasmic membrane where it interacts with the SRP receptor FtsY. This chain is Signal recognition particle 54 kDa protein, found in Methanosarcina barkeri (strain Fusaro / DSM 804).